We begin with the raw amino-acid sequence, 364 residues long: Medium-wave-sensitive opsin 2 (364 aa).

The segment at 1–23 (MAQQWSLQRLAGRHPQDSYEDST) is disordered. Topologically, residues 1–52 (MAQQWSLQRLAGRHPQDSYEDSTQSSIFTYTNSNSTRGPFEGPNYHIAPRWV) are extracellular. The required for 11-cis-retinal regeneration stretch occupies residues 17-43 (DSYEDSTQSSIFTYTNSNSTRGPFEGP). Asn-34 is a glycosylation site (N-linked (GlcNAc...) asparagine). The chain crosses the membrane as a helical span at residues 53–77 (YHLTSVWMIFVVIASVFTNGLVLAA). Residues 78 to 89 (TMKFKKLRHPLN) lie on the Cytoplasmic side of the membrane. A helical membrane pass occupies residues 90-115 (WILVNLAVADLAETVIASTISVVNQV). Over 116 to 129 (YGYFVLGHPMCVLE) the chain is Extracellular. Cys-126 and Cys-203 form a disulfide bridge. The chain crosses the membrane as a helical span at residues 130–149 (GYTVSLCGITGLWSLAIISW). At 150–168 (ERWMVVCKPFGNVRFDAKL) the chain is on the cytoplasmic side. A helical membrane pass occupies residues 169-192 (AIVGIAFSWIWAAVWTAPPIFGWS). Topologically, residues 193–218 (RYWPHGLKTSCGPDVFSGSSYPGVQS) are extracellular. The helical transmembrane segment at 219 to 246 (YMIVLMVTCCITPLSIIVLCYLQVWLAI) threads the bilayer. Residues 247–268 (RAVAKQQKESESTQKAEKEVTR) lie on the Cytoplasmic side of the membrane. Residues 269–292 (MVVVMVLAFCFCWGPYAFFACFAA) form a helical membrane-spanning segment. Topologically, residues 293 to 300 (ANPGYPFH) are extracellular. The chain crosses the membrane as a helical span at residues 301–325 (PLMAALPAFFAKSATIYNPVIYVFM). Residue Lys-312 is modified to N6-(retinylidene)lysine. Over 326 to 364 (NRQFRNCILQLFGKKVDDGSELSSASKTEVSSVSSVSPA) the chain is Cytoplasmic.

This sequence belongs to the G-protein coupled receptor 1 family. Opsin subfamily. In terms of processing, N-glycosylated. O-glycosylated. Phosphorylated on some or all of the serine and threonine residues present in the C-terminal region.

Its subcellular location is the cell membrane. Functionally, visual pigments are the light-absorbing molecules that mediate vision. They consist of an apoprotein, opsin, covalently linked to cis-retinal. The sequence is that of Medium-wave-sensitive opsin 2 from Homo sapiens (Human).